The primary structure comprises 424 residues: Kynureninase (424 aa).

Residues L109, T110, 137-140 (FPSD), D222, H225, and Y247 contribute to the pyridoxal 5'-phosphate site. An N6-(pyridoxal phosphate)lysine modification is found at K248. The pyridoxal 5'-phosphate site is built by W278 and N306.

It belongs to the kynureninase family. In terms of assembly, homodimer. The cofactor is pyridoxal 5'-phosphate.

It carries out the reaction L-kynurenine + H2O = anthranilate + L-alanine + H(+). It catalyses the reaction 3-hydroxy-L-kynurenine + H2O = 3-hydroxyanthranilate + L-alanine + H(+). The protein operates within amino-acid degradation; L-kynurenine degradation; L-alanine and anthranilate from L-kynurenine: step 1/1. It functions in the pathway cofactor biosynthesis; NAD(+) biosynthesis; quinolinate from L-kynurenine: step 2/3. Its function is as follows. Catalyzes the cleavage of L-kynurenine (L-Kyn) and L-3-hydroxykynurenine (L-3OHKyn) into anthranilic acid (AA) and 3-hydroxyanthranilic acid (3-OHAA), respectively. The chain is Kynureninase from Koribacter versatilis (strain Ellin345).